The following is a 279-amino-acid chain: Thymidylate synthase (279 aa).

132–133 (RR) is a binding site for dUMP. C153 serves as the catalytic Nucleophile. Residues 178–181 (RSND), N189, and 219–221 (HIY) each bind dUMP. D181 provides a ligand contact to (6R)-5,10-methylene-5,6,7,8-tetrahydrofolate. A278 contacts (6R)-5,10-methylene-5,6,7,8-tetrahydrofolate.

The protein belongs to the thymidylate synthase family. Bacterial-type ThyA subfamily. Homodimer.

Its subcellular location is the cytoplasm. It carries out the reaction dUMP + (6R)-5,10-methylene-5,6,7,8-tetrahydrofolate = 7,8-dihydrofolate + dTMP. It participates in pyrimidine metabolism; dTTP biosynthesis. Catalyzes the reductive methylation of 2'-deoxyuridine-5'-monophosphate (dUMP) to 2'-deoxythymidine-5'-monophosphate (dTMP) while utilizing 5,10-methylenetetrahydrofolate (mTHF) as the methyl donor and reductant in the reaction, yielding dihydrofolate (DHF) as a by-product. This enzymatic reaction provides an intracellular de novo source of dTMP, an essential precursor for DNA biosynthesis. The sequence is that of Thymidylate synthase from Lactococcus lactis subsp. lactis (strain IL1403) (Streptococcus lactis).